Consider the following 403-residue polypeptide: Tyrosine--tRNA ligase (403 aa).

A 'HIGH' region motif is present at residues 42 to 51 (PTAPDLHLGH). A 'KMSKS' region motif is present at residues 226–230 (KMSKS). Lysine 229 contributes to the ATP binding site. An S4 RNA-binding domain is found at 339-400 (LRIASLLTAA…GKRNFARVSL (62 aa)).

This sequence belongs to the class-I aminoacyl-tRNA synthetase family. TyrS type 2 subfamily. In terms of assembly, homodimer.

It localises to the cytoplasm. It catalyses the reaction tRNA(Tyr) + L-tyrosine + ATP = L-tyrosyl-tRNA(Tyr) + AMP + diphosphate + H(+). Catalyzes the attachment of tyrosine to tRNA(Tyr) in a two-step reaction: tyrosine is first activated by ATP to form Tyr-AMP and then transferred to the acceptor end of tRNA(Tyr). The chain is Tyrosine--tRNA ligase from Xanthomonas oryzae pv. oryzae (strain MAFF 311018).